Consider the following 325-residue polypeptide: Hydroxymethylglutaryl-CoA lyase, mitochondrial (325 aa).

The N-terminal 27 residues, M1–G27, are a transit peptide targeting the mitochondrion. A Pyruvate carboxyltransferase domain is found at V33–L300. Residue R41 coordinates substrate. D42 is an a divalent metal cation binding site. An N6-acetyllysine; alternate modification is found at K48. K48 carries the post-translational modification N6-succinyllysine; alternate. K111 is modified (N6-acetyllysine). An N6-acetyllysine; alternate mark is found at K137 and K179. 2 positions are modified to N6-succinyllysine; alternate: K137 and K179. Residues H233 and H235 each contribute to the a divalent metal cation site. The active site involves C266. Position 275 (N275) interacts with a divalent metal cation. The Microbody targeting signal motif lies at C323–L325. At K324 the chain carries N6-acetyllysine.

The protein belongs to the HMG-CoA lyase family. Homodimer; disulfide-linked. Can also form homotetramers.

The protein resides in the mitochondrion matrix. Its subcellular location is the peroxisome. It carries out the reaction (3S)-3-hydroxy-3-methylglutaryl-CoA = acetoacetate + acetyl-CoA. It functions in the pathway metabolic intermediate metabolism; (S)-3-hydroxy-3-methylglutaryl-CoA degradation; acetoacetate from (S)-3-hydroxy-3-methylglutaryl-CoA: step 1/1. Functionally, mitochondrial 3-hydroxy-3-methylglutaryl-CoA lyase that catalyzes a cation-dependent cleavage of (S)-3-hydroxy-3-methylglutaryl-CoA into acetyl-CoA and acetoacetate, a key step in ketogenesis. Terminal step in leucine catabolism. Ketone bodies (beta-hydroxybutyrate, acetoacetate and acetone) are essential as an alternative source of energy to glucose, as lipid precursors and as regulators of metabolism. The polypeptide is Hydroxymethylglutaryl-CoA lyase, mitochondrial (HMGCL) (Bos taurus (Bovine)).